The primary structure comprises 293 residues: MNNWTHIPVLTKEIGQMLITDINGVYIDGTLGLGGHTKYLLGLLGKEAKIIGFDKDYNAVKMAEANVADGRLTAINLSYEAAPKVLKDLKIQGGADGVLLDLGLSSYQLDDASRGFSFMGGGPLDMRFDISGQKTAADVVNSYTAEELERIFANYGEETNARNAAAAIVRARVDKKIKTTSELANILAPVLPRRGKTHGATRVFQALRIEVNDELGTVERFIKVLPEVLKPGGRAAVITFHSLEDRIVKNIFKQMSAEGEVKLVNKHVIEPEWEEVKNNRRSRSAKLRVAEKI.

S-adenosyl-L-methionine contacts are provided by residues 34 to 36, Asp-54, Leu-86, Asp-101, and Gln-108; that span reads GGH.

Belongs to the methyltransferase superfamily. RsmH family.

The protein localises to the cytoplasm. The catalysed reaction is cytidine(1402) in 16S rRNA + S-adenosyl-L-methionine = N(4)-methylcytidine(1402) in 16S rRNA + S-adenosyl-L-homocysteine + H(+). Functionally, specifically methylates the N4 position of cytidine in position 1402 (C1402) of 16S rRNA. The polypeptide is Ribosomal RNA small subunit methyltransferase H (Elusimicrobium minutum (strain Pei191)).